The primary structure comprises 356 residues: MQMTFRWYGDSDPVTLEYIRQIPGVTGIVSAIYDIPVGEAWPYEKIVELKEKIENHGLSLSVIESVPVHEDIKLGLPTRDQYIENYKTTIRNLAKAGVKIVCYNFMPVFDWTRSSLDYALEDGSTALIYEEEKVRQMNPLHGELKLPGWDTSYEDGQLKNLFQQYQHMTEEDLWENLSYFIKAVIPAAENEQVKMAIHPDDPPWPIFGLPRIITNKENLERLIHLYDSSFNGLCLCSGSLGVKSTNDIPELIRYFGKKGKVNFVHLRNIKIIGEKSFQESSHRSEDGSLDMYEIVRALRDIDFAGPARPDHGRMIWGETGKPGYGLYDRALGAVYLNGMWETLTKEKKRIALECNK.

Belongs to the mannonate dehydratase family. The cofactor is Fe(2+). It depends on Mn(2+) as a cofactor.

It carries out the reaction D-mannonate = 2-dehydro-3-deoxy-D-gluconate + H2O. It participates in carbohydrate metabolism; pentose and glucuronate interconversion. Its function is as follows. Catalyzes the dehydration of D-mannonate. The protein is Mannonate dehydratase 2 of Bacillus licheniformis (strain ATCC 14580 / DSM 13 / JCM 2505 / CCUG 7422 / NBRC 12200 / NCIMB 9375 / NCTC 10341 / NRRL NRS-1264 / Gibson 46).